The chain runs to 87 residues: Cytochrome c oxidase assembly factor 3, mitochondrial (87 aa).

Residues asparagine 47–serine 69 traverse the membrane as a helical segment.

Belongs to the COA3 family.

It localises to the mitochondrion membrane. In terms of biological role, plays a critical role in the biogenesis and activity of cytochrome c oxidase (COX) (complex IV). This chain is Cytochrome c oxidase assembly factor 3, mitochondrial (Ccdc56), found in Drosophila melanogaster (Fruit fly).